Consider the following 358-residue polypeptide: Nicotinate-nucleotide--dimethylbenzimidazole phosphoribosyltransferase (358 aa).

The Proton acceptor role is filled by E314.

The protein belongs to the CobT family.

The enzyme catalyses 5,6-dimethylbenzimidazole + nicotinate beta-D-ribonucleotide = alpha-ribazole 5'-phosphate + nicotinate + H(+). It participates in nucleoside biosynthesis; alpha-ribazole biosynthesis; alpha-ribazole from 5,6-dimethylbenzimidazole: step 1/2. Its function is as follows. Catalyzes the synthesis of alpha-ribazole-5'-phosphate from nicotinate mononucleotide (NAMN) and 5,6-dimethylbenzimidazole (DMB). In Mycobacterium ulcerans (strain Agy99), this protein is Nicotinate-nucleotide--dimethylbenzimidazole phosphoribosyltransferase.